A 530-amino-acid chain; its full sequence is Poly(U)-binding-splicing factor PUF60 (530 aa).

An inhibits homodimerization region spans residues 1-487 (MATATIALGT…EDAEIIVKIF (487 aa)). A Glycyl lysine isopeptide (Lys-Gly) (interchain with G-Cter in SUMO2) cross-link involves residue K14. T31 is modified (phosphothreonine). The inhibits transcriptional repression, interaction with ERCC3 and apoptosis induction stretch occupies residues 48–530 (QSIKSVLVKQ…ERFDNSDLSA (483 aa)). Residue K51 forms a Glycyl lysine isopeptide (Lys-Gly) (interchain with G-Cter in SUMO2) linkage. At S83 the chain carries Phosphoserine. RRM domains follow at residues 100-178 (CRVY…RPSN) and 197-275 (NRIY…KAVT). S215 carries the post-translational modification Phosphoserine. K222 bears the N6-acetyllysine mark. The residue at position 285 (T285) is a Phosphothreonine. The segment at 387 to 408 (KKEKEEEELFPESERPEMLSEQ) is disordered. K390 is covalently cross-linked (Glycyl lysine isopeptide (Lys-Gly) (interchain with G-Cter in SUMO2)). Over residues 398-408 (ESERPEMLSEQ) the composition is skewed to basic and acidic residues. K425 carries the post-translational modification N6-acetyllysine. K429 participates in a covalent cross-link: Glycyl lysine isopeptide (Lys-Gly) (interchain with G-Cter in SUMO2). An RRM 3; atypical domain is found at 433 to 520 (TVMVLRNMVD…RKVVAEVYDQ (88 aa)).

The protein belongs to the RRM half pint family. Homodimer. Associates with the spliceosome. Found in a complex with RO60 and Y5 RNA. Found in a complex with FUBP1 and far upstream element (FUSE) DNA segment. Interacts directly with ERCC3. Interacts with CDK7 and GTF2H1. Interacts with SRSF11/P54. Interacts with ARGLU1; interaction may be involved in ARGLU1-mediated modulation of alternative splicing.

It is found in the nucleus. Functionally, DNA- and RNA-binding protein, involved in several nuclear processes such as pre-mRNA splicing, apoptosis and transcription regulation. In association with FUBP1 regulates MYC transcription at the P2 promoter through the core-TFIIH basal transcription factor. Acts as a transcriptional repressor through the core-TFIIH basal transcription factor. Represses FUBP1-induced transcriptional activation but not basal transcription. Decreases ERCC3 helicase activity. Is also involved in pre-mRNA splicing. Promotes splicing of an intron with weak 3'-splice site and pyrimidine tract in a cooperative manner with U2AF2. Involved in apoptosis induction when overexpressed in HeLa cells. Modulates alternative splicing of several mRNAs. Binds to relaxed DNA of active promoter regions. Binds to the pyrimidine tract and 3'-splice site regions of pre-mRNA; binding is enhanced in presence of U2AF2. Binds to Y5 RNA in association with RO60. Binds to poly(U) RNA. This chain is Poly(U)-binding-splicing factor PUF60, found in Bos taurus (Bovine).